The primary structure comprises 338 residues: Erlin-2 (338 aa).

Topologically, residues 1–3 are cytoplasmic; it reads MAQ. The helical transmembrane segment at 4–24 threads the bilayer; it reads LGAVVAVAASFFCASLFSAVH. Over 25–338 the chain is Lumenal; sequence KIEEGHIGVY…DEPMEADSEN (314 aa). The N-linked (GlcNAc...) asparagine glycan is linked to Asn-106. Residues 177–309 are interaction with ERLIN1; that stretch reads EAIRRNYELM…DIPNMFMDSA (133 aa). N6-acetyllysine is present on Lys-267.

The protein belongs to the band 7/mec-2 family. In terms of assembly, forms a heteromeric complex with ERLIN1. In complex with ERLIN1, interacts with RNF170. Interacts with activated ITPR1, independently of the degree of ITPR1 polyubiquitination. Interacts with SCAP, INSIG1, SREBF1 and SREBF2 under cholesterol sufficiency conditions; indicative for an association with the SCAP-SREBP-INSIG complex. Probably part of an AMFR/gp78 and INSIG1-containing ubiquitin ligase complex involved in ERAD of HMGCR. Interacts with TMUB1; TMUB1 bridges the association with AMFR. Interacts with SYVN1 and RNF139. Interacts with TMEM259. Interacts with TMEM41B. Post-translationally, deubiquitinated by USP25; leading to stabilization.

The protein localises to the endoplasmic reticulum membrane. Component of the ERLIN1/ERLIN2 complex which mediates the endoplasmic reticulum-associated degradation (ERAD) of inositol 1,4,5-trisphosphate receptors (IP3Rs) such as ITPR1. Promotes sterol-accelerated ERAD of HMGCR probably implicating an AMFR/gp78-containing ubiquitin ligase complex. Involved in regulation of cellular cholesterol homeostasis by regulation the SREBP signaling pathway. May promote ER retention of the SCAP-SREBF complex. The chain is Erlin-2 (ERLIN2) from Bos taurus (Bovine).